Reading from the N-terminus, the 194-residue chain is MLIEILLLAGAYLLGSIPTGLLLAKAAGVDIRTTGSGNIGATNVYRTLGRSVGIATLVGDCLKGLIPVLAAKYLGMTDLWIALAGLAAFLGHVYTVFLGFKGGKGVATALGVFLGLAPLAVLIALGIFVAVVATSRYISLGSITAAAAMPPVVAFLSGRPPLVGVTVVIALLVIWKHRENIQRLRAGTENRFKA.

The next 5 membrane-spanning stretches (helical) occupy residues L2 to L22, S51 to A71, W80 to F100, V112 to V132, and F155 to W175.

Belongs to the PlsY family. In terms of assembly, probably interacts with PlsX.

The protein resides in the cell inner membrane. It carries out the reaction an acyl phosphate + sn-glycerol 3-phosphate = a 1-acyl-sn-glycero-3-phosphate + phosphate. It functions in the pathway lipid metabolism; phospholipid metabolism. Catalyzes the transfer of an acyl group from acyl-phosphate (acyl-PO(4)) to glycerol-3-phosphate (G3P) to form lysophosphatidic acid (LPA). This enzyme utilizes acyl-phosphate as fatty acyl donor, but not acyl-CoA or acyl-ACP. This is Glycerol-3-phosphate acyltransferase from Geobacter metallireducens (strain ATCC 53774 / DSM 7210 / GS-15).